The primary structure comprises 526 residues: Peptide chain release factor 3 (526 aa).

One can recognise a tr-type G domain in the interval asparagine 9–glutamine 277. Residues serine 18 to threonine 25, aspartate 86 to histidine 90, and asparagine 140 to aspartate 143 each bind GTP.

This sequence belongs to the TRAFAC class translation factor GTPase superfamily. Classic translation factor GTPase family. PrfC subfamily.

Its subcellular location is the cytoplasm. Increases the formation of ribosomal termination complexes and stimulates activities of RF-1 and RF-2. It binds guanine nucleotides and has strong preference for UGA stop codons. It may interact directly with the ribosome. The stimulation of RF-1 and RF-2 is significantly reduced by GTP and GDP, but not by GMP. The sequence is that of Peptide chain release factor 3 from Legionella pneumophila (strain Lens).